Reading from the N-terminus, the 312-residue chain is Ribosomal RNA small subunit methyltransferase H (312 aa).

S-adenosyl-L-methionine-binding positions include 34–36 (AGH), Asp-54, Phe-81, Asp-102, and Gln-109.

This sequence belongs to the methyltransferase superfamily. RsmH family.

The protein resides in the cytoplasm. It catalyses the reaction cytidine(1402) in 16S rRNA + S-adenosyl-L-methionine = N(4)-methylcytidine(1402) in 16S rRNA + S-adenosyl-L-homocysteine + H(+). Functionally, specifically methylates the N4 position of cytidine in position 1402 (C1402) of 16S rRNA. The polypeptide is Ribosomal RNA small subunit methyltransferase H (Geotalea daltonii (strain DSM 22248 / JCM 15807 / FRC-32) (Geobacter daltonii)).